Reading from the N-terminus, the 452-residue chain is Retinoid-inducible serine carboxypeptidase (452 aa).

The signal sequence occupies residues 1–26 (MELALRRSPVPRWLLLLPLLLGLNAG). N-linked (GlcNAc...) asparagine glycans are attached at residues asparagine 64 and asparagine 126. Serine 167 is a catalytic residue. An N-linked (GlcNAc...) asparagine glycan is attached at asparagine 362. Active-site residues include aspartate 371 and histidine 431.

Belongs to the peptidase S10 family.

Its subcellular location is the secreted. Its function is as follows. May be involved in vascular wall and kidney homeostasis. The sequence is that of Retinoid-inducible serine carboxypeptidase (SCPEP1) from Homo sapiens (Human).